Here is a 281-residue protein sequence, read N- to C-terminus: Sorbose reductase SOU1 (281 aa).

Residues Ile-47, Lys-74, and Asn-119 each coordinate NADP(+). Residues Ser-173 and Tyr-188 each act as proton donor in the active site. The NADP(+) site is built by Tyr-188, Lys-192, Ile-221, and Thr-223. The Lowers pKa of active site Tyr role is filled by Lys-192.

The protein belongs to the short-chain dehydrogenases/reductases (SDR) family. As to quaternary structure, homotetramer.

It carries out the reaction D-sorbitol + NADP(+) = keto-L-sorbose + NADPH + H(+). The protein operates within carbohydrate degradation; L-sorbose degradation. Catalyzes the NADP dependent reduction of L-sorbose to D-glucitol. Can also convert fructose to mannitol, but less efficiently. The protein is Sorbose reductase SOU1 (SOU1) of Candida albicans (strain SC5314 / ATCC MYA-2876) (Yeast).